The sequence spans 935 residues: Protein translocase subunit SecA (935 aa).

ATP contacts are provided by residues glutamine 90, 108 to 112 (GEGKT), and aspartate 504. The interval 543–568 (GGRRPQGFGTSKKKGKNWSPSDADIF) is disordered.

Belongs to the SecA family. In terms of assembly, monomer and homodimer. Part of the essential Sec protein translocation apparatus which comprises SecA, SecYEG and auxiliary proteins SecDF. Other proteins may also be involved.

The protein localises to the cell inner membrane. Its subcellular location is the cellular thylakoid membrane. It localises to the cytoplasm. It carries out the reaction ATP + H2O + cellular proteinSide 1 = ADP + phosphate + cellular proteinSide 2.. In terms of biological role, part of the Sec protein translocase complex. Interacts with the SecYEG preprotein conducting channel. Has a central role in coupling the hydrolysis of ATP to the transfer of proteins into and across the cell membrane, serving as an ATP-driven molecular motor driving the stepwise translocation of polypeptide chains across the membrane. Its function is as follows. Probably participates in protein translocation into and across both the cytoplasmic and thylakoid membranes in cyanobacterial cells. The chain is Protein translocase subunit SecA from Rippkaea orientalis (strain PCC 8801 / RF-1) (Cyanothece sp. (strain PCC 8801)).